The primary structure comprises 297 residues: Methionyl-tRNA formyltransferase (297 aa).

Residues 31 to 52 (QPPRAAGRGQKPRPSPVHRAAE) are disordered. 108 to 111 (SLLP) provides a ligand contact to (6S)-5,6,7,8-tetrahydrofolate.

This sequence belongs to the Fmt family.

The enzyme catalyses L-methionyl-tRNA(fMet) + (6R)-10-formyltetrahydrofolate = N-formyl-L-methionyl-tRNA(fMet) + (6S)-5,6,7,8-tetrahydrofolate + H(+). In terms of biological role, attaches a formyl group to the free amino group of methionyl-tRNA(fMet). The formyl group appears to play a dual role in the initiator identity of N-formylmethionyl-tRNA by promoting its recognition by IF2 and preventing the misappropriation of this tRNA by the elongation apparatus. The sequence is that of Methionyl-tRNA formyltransferase from Paracoccus denitrificans (strain Pd 1222).